The primary structure comprises 205 residues: Large ribosomal subunit protein uL4 (205 aa).

The protein belongs to the universal ribosomal protein uL4 family. Part of the 50S ribosomal subunit.

Functionally, one of the primary rRNA binding proteins, this protein initially binds near the 5'-end of the 23S rRNA. It is important during the early stages of 50S assembly. It makes multiple contacts with different domains of the 23S rRNA in the assembled 50S subunit and ribosome. Forms part of the polypeptide exit tunnel. This chain is Large ribosomal subunit protein uL4, found in Ruegeria sp. (strain TM1040) (Silicibacter sp.).